The sequence spans 183 residues: Photosystem I assembly protein Ycf4 (183 aa).

The next 2 membrane-spanning stretches (helical) occupy residues 21 to 43 (YWWA…SSRL) and 58 to 80 (FIPQ…TYLW).

Belongs to the Ycf4 family.

The protein resides in the plastid. Its subcellular location is the chloroplast thylakoid membrane. Seems to be required for the assembly of the photosystem I complex. The chain is Photosystem I assembly protein Ycf4 from Nephroselmis olivacea (Green alga).